The primary structure comprises 164 residues: Peptidyl-prolyl cis-trans isomerase CYP18-2 (164 aa).

The PPIase cyclophilin-type domain occupies Val12–Val162.

This sequence belongs to the cyclophilin-type PPIase family. In terms of tissue distribution, ubiquitous.

The protein resides in the cytoplasm. The enzyme catalyses [protein]-peptidylproline (omega=180) = [protein]-peptidylproline (omega=0). PPIases accelerate the folding of proteins. It catalyzes the cis-trans isomerization of proline imidic peptide bonds in oligopeptides. This Arabidopsis thaliana (Mouse-ear cress) protein is Peptidyl-prolyl cis-trans isomerase CYP18-2 (CYP18-2).